A 175-amino-acid chain; its full sequence is Large ribosomal subunit protein uL10 (175 aa).

It belongs to the universal ribosomal protein uL10 family. Part of the ribosomal stalk of the 50S ribosomal subunit. The N-terminus interacts with L11 and the large rRNA to form the base of the stalk. The C-terminus forms an elongated spine to which L12 dimers bind in a sequential fashion forming a multimeric L10(L12)X complex.

Forms part of the ribosomal stalk, playing a central role in the interaction of the ribosome with GTP-bound translation factors. The sequence is that of Large ribosomal subunit protein uL10 from Prochlorococcus marinus (strain MIT 9313).